The following is a 753-amino-acid chain: Bile salt-activated lipase (753 aa).

Positions 1 to 20 (MGRLQLVVLGLTCCWAVASA) are cleaved as a signal peptide. The segment at 21-121 (AKLGAVYTEG…KQVSRDLPVM (101 aa)) is heparin-binding. A disulfide bridge connects residues Cys84 and Cys100. An N-linked (GlcNAc...) (complex) asparagine glycan is attached at Asn207. Residue Ser214 is the Acyl-ester intermediate of the active site. Cysteines 266 and 277 form a disulfide. Active-site charge relay system residues include Asp340 and His455. The disordered stretch occupies residues 555 to 753 (QEATPVPPTG…EAQMPAVIRF (199 aa)). O-linked (GalNAc...) threonine glycosylation is found at Thr558, Thr569, and Thr579. 17 consecutive repeat copies span residues 559–569 (PVPPTGDSEAT), 570–580 (PVPPTGDSETA), 581–591 (PVPPTGDSGAP), 592–602 (PVPPTGDSGAP), 603–613 (PVPPTGDSGAP), 614–624 (PVPPTGDSGAP), 625–635 (PVPPTGDSGAP), 636–646 (PVPPTGDSGAP), 647–657 (PVPPTGDSGAP), 658–668 (PVPPTGDSGAP), 669–679 (PVPPTGDAGPP), 680–690 (PVPPTGDSGAP), 691–701 (PVPPTGDSGAP), 702–712 (PVTPTGDSETA), 713–723 (PVPPTGDSGAP), 724–734 (PVPPTGDSEAA), and 735–745 (PVPPTDDSKEA). Residues 559–745 (PVPPTGDSEA…VPPTDDSKEA (187 aa)) form a 17 X 11 AA tandem repeats, glycodomain, O-linked (mucin type) region. Residues Thr607, Thr618, Thr629, Thr640, Thr651, Thr662, and Thr673 are each glycosylated (O-linked (GalNAc...) threonine). The segment covering 668-683 (PPVPPTGDAGPPPVPP) has biased composition (pro residues).

It belongs to the type-B carboxylesterase/lipase family. Interacts with CLC. Post-translationally, N- and O-glycosylated. As to expression, mammary gland and pancreas. Detected in pancreatic and duodenal juice (at protein level). Expressed by eosinophils.

The protein localises to the secreted. The enzyme catalyses a triacylglycerol + H2O = a diacylglycerol + a fatty acid + H(+). It catalyses the reaction 1,2,3-tri-(9Z-octadecenoyl)-glycerol + H2O = di-(9Z)-octadecenoylglycerol + (9Z)-octadecenoate + H(+). It carries out the reaction 1,2,3-trioctanoylglycerol + H2O = dioctanoylglycerol + octanoate + H(+). The catalysed reaction is a sterol ester + H2O = a sterol + a fatty acid + H(+). The enzyme catalyses cholesteryl (9Z-octadecenoate) + H2O = cholesterol + (9Z)-octadecenoate + H(+). It catalyses the reaction an acetyl ester + H2O = an aliphatic alcohol + acetate + H(+). It carries out the reaction a butanoate ester + H2O = an aliphatic alcohol + butanoate + H(+). The catalysed reaction is 9-hexadecanoyloxy-octadecanoate + H2O = 9-hydroxy-octadecanoate + hexadecanoate + H(+). The enzyme catalyses 9-(9Z-octadecenoyloxy)-octadecanoate + H2O = 9-hydroxy-octadecanoate + (9Z)-octadecenoate + H(+). It catalyses the reaction 1-hexadecanoyl-sn-glycero-3-phosphocholine + H2O = sn-glycerol 3-phosphocholine + hexadecanoate + H(+). It carries out the reaction 12-hexadecanoyloxy-octadecanoate + H2O = 12-hydroxyoctadecanoate + hexadecanoate + H(+). The catalysed reaction is 12-(9Z-octadecenoyloxy)-octadecanoate + H2O = 12-hydroxyoctadecanoate + (9Z)-octadecenoate + H(+). The enzyme catalyses 13-(9Z-octadecenoyloxy)-octadecanoate + H2O = 13-hydroxy-octadecanoate + (9Z)-octadecenoate + H(+). It catalyses the reaction 9-(9Z-hexadecenoyloxy)-octadecanoate + H2O = (9Z)-hexadecenoate + 9-hydroxy-octadecanoate + H(+). It carries out the reaction 12-(9Z-hexadecenoyloxy)-octadecanoate + H2O = 12-hydroxyoctadecanoate + (9Z)-hexadecenoate + H(+). The catalysed reaction is 13-(9Z-hexadecenoyloxy)-octadecanoate + H2O = 13-hydroxy-octadecanoate + (9Z)-hexadecenoate + H(+). The enzyme catalyses 12-octadecanoyloxy-octadecanoate + H2O = 12-hydroxyoctadecanoate + octadecanoate + H(+). It catalyses the reaction 13-octadecanoyloxy-octadecanoate + H2O = 13-hydroxy-octadecanoate + octadecanoate + H(+). It carries out the reaction 5-(9Z-hexadecenoyloxy)-octadecanoate + H2O = 5-hydroxy-octadecanoate + (9Z)-hexadecenoate + H(+). The catalysed reaction is 9-octadecanoyloxy-octadecanoate + H2O = 9-hydroxy-octadecanoate + octadecanoate + H(+). With respect to regulation, activated by bile salts such as sodium taurocholate. Catalyzes the hydrolysis of a wide range of substrates including cholesteryl esters, phospholipids, lysophospholipids, di- and tri-acylglycerols, and fatty acid esters of hydroxy fatty acids (FAHFAs). Preferentially hydrolyzes FAHFAs with the ester bond further away from the carboxylate. Unsaturated FAHFAs are hydrolyzed more quickly than saturated FAHFAs. Has an essential role in the complete digestion of dietary lipids and their intestinal absorption, along with the absorption of fat-soluble vitamins. This Homo sapiens (Human) protein is Bile salt-activated lipase (CEL).